Reading from the N-terminus, the 420-residue chain is Multifunctional CCA protein (420 aa).

Positions 8 and 11 each coordinate ATP. Residues Gly-8 and Arg-11 each coordinate CTP. Residues Asp-21 and Asp-23 each coordinate Mg(2+). The ATP site is built by Arg-91, Arg-137, and Arg-140. CTP is bound by residues Arg-91, Arg-137, and Arg-140. The HD domain maps to 228-334 (TFVHTMLVLQ…LKLFNRLDVW (107 aa)).

The protein belongs to the tRNA nucleotidyltransferase/poly(A) polymerase family. Bacterial CCA-adding enzyme type 1 subfamily. In terms of assembly, monomer. Can also form homodimers and oligomers. Mg(2+) is required as a cofactor. It depends on Ni(2+) as a cofactor.

The catalysed reaction is a tRNA precursor + 2 CTP + ATP = a tRNA with a 3' CCA end + 3 diphosphate. It catalyses the reaction a tRNA with a 3' CCA end + 2 CTP + ATP = a tRNA with a 3' CCACCA end + 3 diphosphate. Its function is as follows. Catalyzes the addition and repair of the essential 3'-terminal CCA sequence in tRNAs without using a nucleic acid template. Adds these three nucleotides in the order of C, C, and A to the tRNA nucleotide-73, using CTP and ATP as substrates and producing inorganic pyrophosphate. tRNA 3'-terminal CCA addition is required both for tRNA processing and repair. Also involved in tRNA surveillance by mediating tandem CCA addition to generate a CCACCA at the 3' terminus of unstable tRNAs. While stable tRNAs receive only 3'-terminal CCA, unstable tRNAs are marked with CCACCA and rapidly degraded. This chain is Multifunctional CCA protein, found in Pasteurella multocida (strain Pm70).